A 194-amino-acid polypeptide reads, in one-letter code: Thymidine kinase (194 aa).

ATP-binding positions include 15 to 22 (GSMFSGKS) and 88 to 91 (DEVQ). The active-site Proton acceptor is glutamate 89. Cysteine 145, cysteine 148, cysteine 183, and histidine 186 together coordinate Zn(2+).

It belongs to the thymidine kinase family. As to quaternary structure, homotetramer.

It localises to the cytoplasm. The catalysed reaction is thymidine + ATP = dTMP + ADP + H(+). This chain is Thymidine kinase, found in Bacillus velezensis (strain DSM 23117 / BGSC 10A6 / LMG 26770 / FZB42) (Bacillus amyloliquefaciens subsp. plantarum).